The primary structure comprises 471 residues: MATGKILQITGVVIDAEFPADSLPQIYNALEIPLGQGRPSLICEVQQQLGDSVVRAVAMSTTDGLVRGMDVINTGAPISVPVGPETLGRVFDVQGRPIDGEGPVGTTKTMPIHRPAPTFEEQSNRAELFETGIKVIDLIAPFTKGGKTGVFGGAGVGKTVIIQELISNIAKEQSGYSVFAGVGERSREGNDLIHEMKDSKIPGTDQTVFDKTVMVFGQMNEPPGARLRVALSALTMAEYFREEGRDVLLFVDNIFRFTQAGSEVSALLGRMPSQVGYQPTLGTEMGELQERITSTKTGSITSLQAVYVPADDYTDPAPATTFAHLDATISLERSISEKGIYPAVDPLASTSRILDPNIVGEEHYRVATEVQRMLQRYKDLQDIIAILGVEELSDDDKLTVSRARKLERFFSQPFGVAEVFTNIPGKYVAVGDTVKSFARVLAGEFDHIPESFFFMKGRIDDVVAAFDASKQ.

152 to 159 lines the ATP pocket; that stretch reads GGAGVGKT.

Belongs to the ATPase alpha/beta chains family. F-type ATPases have 2 components, CF(1) - the catalytic core - and CF(0) - the membrane proton channel. CF(1) has five subunits: alpha(3), beta(3), gamma(1), delta(1), epsilon(1). CF(0) has three main subunits: a(1), b(2) and c(9-12). The alpha and beta chains form an alternating ring which encloses part of the gamma chain. CF(1) is attached to CF(0) by a central stalk formed by the gamma and epsilon chains, while a peripheral stalk is formed by the delta and b chains.

It localises to the cell membrane. The enzyme catalyses ATP + H2O + 4 H(+)(in) = ADP + phosphate + 5 H(+)(out). Functionally, produces ATP from ADP in the presence of a proton gradient across the membrane. The catalytic sites are hosted primarily by the beta subunits. The polypeptide is ATP synthase subunit beta (Herpetosiphon aurantiacus (Herpetosiphon giganteus)).